Here is a 103-residue protein sequence, read N- to C-terminus: MQPNDITFFQRFQDDILAGRKTITIRDESESHFKTGDVLRVGRFEDDGYFCTIEVTATSTVTLDTLTEKHAKQENMTLTELKKVIADIYPDQTQFYVIEFKCL.

The ASCH domain occupies 6-101 (ITFFQRFQDD…QTQFYVIEFK (96 aa)). The Proton acceptor role is filled by Lys-21. Thr-24 serves as the catalytic Nucleophile. Glu-74 (proton donor) is an active-site residue.

This sequence belongs to the N(4)-acetylcytidine amidohydrolase family.

It catalyses the reaction N(4)-acetylcytidine + H2O = cytidine + acetate + H(+). The catalysed reaction is N(4)-acetyl-2'-deoxycytidine + H2O = 2'-deoxycytidine + acetate + H(+). The enzyme catalyses N(4)-acetylcytosine + H2O = cytosine + acetate + H(+). In terms of biological role, catalyzes the hydrolysis of N(4)-acetylcytidine (ac4C). The sequence is that of N(4)-acetylcytidine amidohydrolase (yqfB) from Escherichia coli O127:H6 (strain E2348/69 / EPEC).